Consider the following 462-residue polypeptide: FAD-dependent monooxygenase opaC (462 aa).

N-linked (GlcNAc...) asparagine glycosylation occurs at Asn10. A helical transmembrane segment spans residues 14–34; it reads ITVIIIGLGIGGLTAAISCHL. Position 43 (Asp43) interacts with FAD. An N-linked (GlcNAc...) asparagine glycan is attached at Asn60. Arg115 provides a ligand contact to FAD. Arg193 is an active-site residue. Residues Asp322 and Ala335 each coordinate FAD.

This sequence belongs to the paxM FAD-dependent monooxygenase family. The cofactor is FAD.

The protein localises to the membrane. It participates in secondary metabolite biosynthesis. FAD-dependent monooxygenase; part of the gene cluster that mediates the biosynthesis of oxepinamides, derivatives of anthranilyl-containing tripeptides that share an oxepin ring and a fused pyrimidinone moiety. The nonribosomal peptide synthetase (NRPS) opaA assembles the quinazolinone core with D-Phe incorporation. The first adenylation domain (A1) of opaA loads and activates anthranilic acid whereas the second A domain (A2) is for activating of L-Phe, which is then converted to D-form by the E domain. The third A domain (A3) is responsible for L-Ile activation and the terminal condensation domain C3 for cyclization and releasing the NRPS product protuboxepin K. The cytochrome P450 monooxygenase opaB then catalyzes alone the oxepin ring formation to convert protuboxepin K into protuboxepin A. The flavoenzyme opaC installs subsequently one hydroxyl group at the oxepin ring, accompanied by double bond migration, to form 15-epi-oxepinamide E. The epimerase opaE changes the D-Phe residue back to L-form, leading to oxepinamide E, which is further methylated at the hydroxyl group at C-12 by the O-methyltransferase OpaF to yield oxepinamide F. This chain is FAD-dependent monooxygenase opaC, found in Aspergillus ustus.